A 758-amino-acid polypeptide reads, in one-letter code: Matrix metalloproteinase-2 (758 aa).

A signal peptide spans 1-17 (MFSKYVLATLLALFAQS). A Zn(2+)-binding site is contributed by histidine 257. Glutamate 258 is a catalytic residue. Histidine 261 and histidine 267 together coordinate Zn(2+). Positions 335–514 (AYWPWNNPSN…HNKPRKPKPD (180 aa)) are disordered. The span at 338-348 (PWNNPSNNPNN) shows a compositional bias: low complexity. Residues 349-476 (DRNRARERQE…EWERRNRNGA (128 aa)) are compositionally biased toward basic and acidic residues. Over residues 479–494 (PVTPTANTTPRPTNKP) the composition is skewed to low complexity. Basic residues predominate over residues 499 to 510 (HRQHHHHNKPRK). Hemopexin repeat units lie at residues 513-561 (PDSC…WSAL), 565-610 (LTKV…GLPP), 612-659 (LTHI…WSGV), and 660-707 (GYNI…WMQC). Cysteines 516 and 707 form a disulfide. Residues 739-756 (LRINHFILSILLLAIANW) traverse the membrane as a helical segment. At 757 to 758 (RS) the chain is on the cytoplasmic side.

Belongs to the peptidase M10A family. Requires Ca(2+) as cofactor. Zn(2+) is required as a cofactor. In terms of tissue distribution, widely expressed during embryogenesis including in the mesoderm, developing gut, central and peripheral nervous systems and imaginal disks. In the embryonic nervous system, expressed in neurons and glia. In third instar larvae, strongly expressed in the morphogenetic furrow of eye imaginal disks and in the optic lobe region of the brain. Expressed in posterior follicle cells in all mature stage 14 follicles but not in earlier follicles and is also expressed in some anterior follicle cells that help form dorsal eggshell structures.

The protein localises to the cell membrane. Its function is as follows. Has metalloproteinase activity. Proteolytically cleaves the PGRP-LC receptor; involved in gut-fat body innate immunological communication (GFIC)-mediated activation of the imd/Relish signal transduction pathway. Required for larval tissue histolysis during metamorphosis and is involved in pupal head eversion and fusion of the wing imaginal tissue. Required for growth of the dorsal air sac primordium and development of the dorsal air sacs. Promotes embryonic motor axon fasciculation. Cleaves and activates frac to promote motor axon bundling during outgrowth. Promotes the reshaping of adult sensory neuron dendrites from a radial to lattice-like shape which occurs after eclosion by degrading the basement membrane on which the dendrites grow. Involved in inhibition of follicle stem cell proliferation by cleaving Dlp, inhibiting its interaction with wg and preventing Dlp-mediated spreading of wg to follicle stem cells to enhance their proliferation. Plays a role in wound healing. Involved in fat body dissociation which occurs during metamorphosis by degrading basement membrane components, leading to destruction of cell-basement membrane junctions. Required for posterior follicle cell degradation and ovulation. This is Matrix metalloproteinase-2 from Drosophila melanogaster (Fruit fly).